A 325-amino-acid polypeptide reads, in one-letter code: Natural cytotoxicity triggering receptor 1 (325 aa).

Positions 1–16 (MLPTLTALLCLGLCLS) are cleaved as a signal peptide. Topologically, residues 17–255 (QRINTEKETL…SAFWDHTTQN (239 aa)) are extracellular. Ig-like domains lie at 34 to 118 (KPSI…LVVT) and 129 to 211 (YPRP…LLIT). Residues C49 and C98 are joined by a disulfide bond. A glycan (N-linked (GlcNAc...) asparagine) is linked at N139. Residues C144 and C190 are joined by a disulfide bond. N-linked (GlcNAc...) asparagine glycosylation is found at N216 and N238. Residues 256 to 273 (LIRIGLACIILITLVWLL) form a helical membrane-spanning segment. Residues 274-325 (TEDWLSKRKDHEEANRLTNWECRRRWRMQHYFEEEQRNAISMMELKATPGAL) lie on the Cytoplasmic side of the membrane.

It belongs to the natural cytotoxicity receptor (NCR) family. In terms of assembly, interacts with CD3Z and FCER1G. As to expression, selectively expressed by NK cells.

The protein resides in the cell membrane. In terms of biological role, cytotoxicity-activating receptor that may contribute to the increased efficiency of activated natural killer (NK) cells to mediate tumor cell lysis. This is Natural cytotoxicity triggering receptor 1 (Ncr1) from Mus musculus (Mouse).